The sequence spans 170 residues: Glycine cleavage system H protein, mitochondrial (170 aa).

A mitochondrion-targeting transit peptide spans 1 to 45 (MSLRVVRSVRAVACSLRIALASCPPRPWAPSAAAVRSLRTGSALL). Positions 63 to 145 (IGTVGISNFA…YEDGWLIKMT (83 aa)) constitute a Lipoyl-binding domain. Lys104 carries the post-translational modification N6-lipoyllysine.

It belongs to the GcvH family. As to quaternary structure, the glycine cleavage system is composed of four proteins: P (GLDC), T (GCST), L (DLD) and H (GCSH). Interacts with GLDC. It depends on (R)-lipoate as a cofactor.

Its subcellular location is the mitochondrion. Functionally, the glycine cleavage system catalyzes the degradation of glycine. The H protein (GCSH) shuttles the methylamine group of glycine from the P protein (GLDC) to the T protein (GCST). Has a pivotal role in the lipoylation of enzymes involved in cellular energetics such as the mitochondrial dihydrolipoyllysine-residue acetyltransferase component of pyruvate dehydrogenase complex (DLAT), and the mitochondrial dihydrolipoyllysine-residue succinyltransferase component of 2-oxoglutarate dehydrogenase complex (DLST). The polypeptide is Glycine cleavage system H protein, mitochondrial (Rattus norvegicus (Rat)).